Reading from the N-terminus, the 672-residue chain is Acetoacetyl-CoA synthetase (672 aa).

This sequence belongs to the ATP-dependent AMP-binding enzyme family.

It is found in the cytoplasm. Its subcellular location is the cytosol. It catalyses the reaction acetoacetate + ATP + CoA = acetoacetyl-CoA + AMP + diphosphate. Activates acetoacetate to acetoacetyl-CoA. The polypeptide is Acetoacetyl-CoA synthetase (aacs) (Xenopus tropicalis (Western clawed frog)).